A 534-amino-acid chain; its full sequence is CTP synthase (534 aa).

The interval 1–268 is amidoligase domain; that stretch reads MSVKYIFVTG…AKIVCKRLGL (268 aa). Serine 14 serves as a coordination point for CTP. UTP is bound at residue serine 14. An ATP-binding site is contributed by 15–20; that stretch reads GLGKGI. Tyrosine 55 lines the L-glutamine pocket. Aspartate 72 serves as a coordination point for ATP. 2 residues coordinate Mg(2+): aspartate 72 and glutamate 142. CTP contacts are provided by residues 149–151, 189–194, and lysine 225; these read DIE and KTKPTQ. Residues 189-194 and lysine 225 each bind UTP; that span reads KTKPTQ. The region spanning 293 to 534 is the Glutamine amidotransferase type-1 domain; sequence TIGLVGKYVE…VRAAYEYKTK (242 aa). Residue glycine 355 participates in L-glutamine binding. The active-site Nucleophile; for glutamine hydrolysis is the cysteine 382. Residues 383–386, glutamate 406, and arginine 462 each bind L-glutamine; that span reads LGMQ. Catalysis depends on residues histidine 507 and glutamate 509.

Belongs to the CTP synthase family. Homotetramer.

The catalysed reaction is UTP + L-glutamine + ATP + H2O = CTP + L-glutamate + ADP + phosphate + 2 H(+). The enzyme catalyses L-glutamine + H2O = L-glutamate + NH4(+). It carries out the reaction UTP + NH4(+) + ATP = CTP + ADP + phosphate + 2 H(+). It functions in the pathway pyrimidine metabolism; CTP biosynthesis via de novo pathway; CTP from UDP: step 2/2. Allosterically activated by GTP, when glutamine is the substrate; GTP has no effect on the reaction when ammonia is the substrate. The allosteric effector GTP functions by stabilizing the protein conformation that binds the tetrahedral intermediate(s) formed during glutamine hydrolysis. Inhibited by the product CTP, via allosteric rather than competitive inhibition. In terms of biological role, catalyzes the ATP-dependent amination of UTP to CTP with either L-glutamine or ammonia as the source of nitrogen. Regulates intracellular CTP levels through interactions with the four ribonucleotide triphosphates. The sequence is that of CTP synthase from Ruminiclostridium cellulolyticum (strain ATCC 35319 / DSM 5812 / JCM 6584 / H10) (Clostridium cellulolyticum).